The chain runs to 458 residues: Divalent metal cation transporter MntH (458 aa).

11 consecutive transmembrane segments (helical) span residues 38 to 58, 76 to 96, 119 to 139, 151 to 171, 180 to 200, 223 to 243, 275 to 295, 315 to 335, 370 to 390, 393 to 413, and 437 to 457; these read GFWK…VGYM, SLLS…AMAA, GGFL…AEII, MPLI…LLLM, AVVA…VILA, MLYL…LFLG, LTMA…LFFG, IVGA…LLAS, LMSV…EAKI, LLTF…IPLV, and FISG…LGFV.

It belongs to the NRAMP family.

It localises to the cell membrane. Functionally, h(+)-stimulated, divalent metal cation uptake system. In Lacticaseibacillus paracasei (strain ATCC 334 / BCRC 17002 / CCUG 31169 / CIP 107868 / KCTC 3260 / NRRL B-441) (Lactobacillus paracasei), this protein is Divalent metal cation transporter MntH.